The chain runs to 271 residues: Putative pyruvate, phosphate dikinase regulatory protein (271 aa).

Residue 153-160 (GVSRTSKT) coordinates ADP.

This sequence belongs to the pyruvate, phosphate/water dikinase regulatory protein family. PDRP subfamily.

It carries out the reaction N(tele)-phospho-L-histidyl/L-threonyl-[pyruvate, phosphate dikinase] + ADP = N(tele)-phospho-L-histidyl/O-phospho-L-threonyl-[pyruvate, phosphate dikinase] + AMP + H(+). The catalysed reaction is N(tele)-phospho-L-histidyl/O-phospho-L-threonyl-[pyruvate, phosphate dikinase] + phosphate + H(+) = N(tele)-phospho-L-histidyl/L-threonyl-[pyruvate, phosphate dikinase] + diphosphate. In terms of biological role, bifunctional serine/threonine kinase and phosphorylase involved in the regulation of the pyruvate, phosphate dikinase (PPDK) by catalyzing its phosphorylation/dephosphorylation. This is Putative pyruvate, phosphate dikinase regulatory protein from Shouchella clausii (strain KSM-K16) (Alkalihalobacillus clausii).